The sequence spans 203 residues: UPF0637 protein EF_3078 (203 aa).

This sequence belongs to the UPF0637 family.

The chain is UPF0637 protein EF_3078 from Enterococcus faecalis (strain ATCC 700802 / V583).